The chain runs to 148 residues: UPF0756 membrane protein YeaL (148 aa).

A run of 4 helical transmembrane segments spans residues 14-34 (ALGF…LIIV), 51-71 (LSIG…SGTL), 86-106 (LVAI…VTLM), and 121-141 (VLGV…AGLV).

The protein belongs to the UPF0756 family.

The protein localises to the cell membrane. The chain is UPF0756 membrane protein YeaL from Escherichia coli (strain B / REL606).